A 362-amino-acid chain; its full sequence is Molybdenum import ATP-binding protein ModC (362 aa).

An ABC transporter domain is found at 2–236 (ASPIEVRLHM…LDLPLAMGGD (235 aa)). 34-41 (GPSGSGKT) is an ATP binding site. The Mop domain occupies 297–362 (QSSILNRLPV…AQIKAVAVLA (66 aa)).

It belongs to the ABC transporter superfamily. Molybdate importer (TC 3.A.1.8) family. In terms of assembly, the complex is composed of two ATP-binding proteins (ModC), two transmembrane proteins (ModB) and a solute-binding protein (ModA).

It localises to the cell inner membrane. It catalyses the reaction molybdate(out) + ATP + H2O = molybdate(in) + ADP + phosphate + H(+). Part of the ABC transporter complex ModABC involved in molybdenum import. Responsible for energy coupling to the transport system. This chain is Molybdenum import ATP-binding protein ModC, found in Pseudomonas savastanoi pv. phaseolicola (strain 1448A / Race 6) (Pseudomonas syringae pv. phaseolicola (strain 1448A / Race 6)).